We begin with the raw amino-acid sequence, 1173 residues long: Eukaryotic translation initiation factor 3 subunit A (1173 aa).

In terms of domain architecture, PCI spans 319-502 (LQRMAAHVLL…NSIYFGTDLT (184 aa)). Disordered regions lie at residues 589 to 613 (QNNA…LAEQ) and 836 to 1173 (AAEA…PVQL). Basic and acidic residues-rich tracts occupy residues 836 to 900 (AAEA…RGGD), 925 to 1011 (DRNE…EPDS), 1028 to 1081 (SRDD…DAAP), and 1090 to 1125 (DAPR…RAPK). Residues 1128 to 1142 (GPSGGTGTAAGGGGN) are compositionally biased toward gly residues. Residues 1149–1165 (PRDEPAPKRDQPQDKGK) show a composition bias toward basic and acidic residues.

It belongs to the eIF-3 subunit A family. Component of the eukaryotic translation initiation factor 3 (eIF-3) complex. The eIF-3 complex interacts with pix.

The protein resides in the cytoplasm. Its function is as follows. RNA-binding component of the eukaryotic translation initiation factor 3 (eIF-3) complex, which is involved in protein synthesis of a specialized repertoire of mRNAs and, together with other initiation factors, stimulates binding of mRNA and methionyl-tRNAi to the 40S ribosome. The eIF-3 complex specifically targets and initiates translation of a subset of mRNAs involved in cell proliferation. This is Eukaryotic translation initiation factor 3 subunit A from Drosophila persimilis (Fruit fly).